The following is a 105-amino-acid chain: Large ribosomal subunit protein uL24 (105 aa).

This sequence belongs to the universal ribosomal protein uL24 family. As to quaternary structure, part of the 50S ribosomal subunit.

Its function is as follows. One of two assembly initiator proteins, it binds directly to the 5'-end of the 23S rRNA, where it nucleates assembly of the 50S subunit. In terms of biological role, one of the proteins that surrounds the polypeptide exit tunnel on the outside of the subunit. The sequence is that of Large ribosomal subunit protein uL24 from Xanthomonas oryzae pv. oryzae (strain PXO99A).